The primary structure comprises 333 residues: MSSKNEIWKNEALISALKTIEKNYGKEALVVYNEGDDIDHDVISSGSFLIDQAIGIGGYPKGRVVEIFGPESSGKTTLALHAIAEAQKQGEIAAFIDAEHSLDLNYAKKIGVDINSLLVSQPSYGEEALDILETLVKSNSISLIVVDSVAALVPKTELEGEMSDQSIGLQARMMSKALRKLNGVISKSKTTVIFINQLREKIGIMFGNPETTTGGRALKFFSTLRIEVRKGESLIENGIVVANKVKVKVVKNKVAVPFKQTLITIGYDKGIERINEIIELATLYNILDKSGVWYSYEKEKIGQGKNAVKEWLNKNPDKLSKIEFELKEFIEKS.

Position 69–76 (69–76 (GPESSGKT)) interacts with ATP.

This sequence belongs to the RecA family.

The protein resides in the cytoplasm. Functionally, can catalyze the hydrolysis of ATP in the presence of single-stranded DNA, the ATP-dependent uptake of single-stranded DNA by duplex DNA, and the ATP-dependent hybridization of homologous single-stranded DNAs. It interacts with LexA causing its activation and leading to its autocatalytic cleavage. In Mesoplasma florum (strain ATCC 33453 / NBRC 100688 / NCTC 11704 / L1) (Acholeplasma florum), this protein is Protein RecA.